The chain runs to 592 residues: Bifunctional enzyme BirA/CoaX (592 aa).

The tract at residues 1 to 329 (MTVLKLSHWR…ISLRSDDRPV (329 aa)) is biotin--protein ligase. The region spanning 83–259 (QTALKHECAS…ELDAVLLQYA (177 aa)) is the BPL/LPL catalytic domain. Residues 336–592 (DSERFLLLDG…AAEGREYEHI (257 aa)) form a type III pantothenate kinase region. 344–351 (DGGNSRLK) provides a ligand contact to ATP. Substrate contacts are provided by residues Tyr426 and 433-436 (GSDR). Residue Asp435 is the Proton acceptor of the active site. Residue Thr458 coordinates ATP. Thr508 is a binding site for substrate.

The protein in the N-terminal section; belongs to the biotin--protein ligase family. This sequence in the C-terminal section; belongs to the type III pantothenate kinase family. NH4(+) is required as a cofactor. The cofactor is K(+).

Its subcellular location is the cytoplasm. It carries out the reaction biotin + L-lysyl-[protein] + ATP = N(6)-biotinyl-L-lysyl-[protein] + AMP + diphosphate + H(+). It catalyses the reaction (R)-pantothenate + ATP = (R)-4'-phosphopantothenate + ADP + H(+). It participates in cofactor biosynthesis; coenzyme A biosynthesis; CoA from (R)-pantothenate: step 1/5. Functionally, activates biotin to form biotinyl-5'-adenylate and transfers the biotin moiety to biotin-accepting proteins. Its function is as follows. Catalyzes the phosphorylation of pantothenate (Pan), the first step in CoA biosynthesis. This is Bifunctional enzyme BirA/CoaX (birA/coaX) from Neisseria meningitidis serogroup B (strain ATCC BAA-335 / MC58).